Reading from the N-terminus, the 226-residue chain is 7-cyano-7-deazaguanine synthase (226 aa).

10–20 contributes to the ATP binding site; it reads FSGGQDSTTLA. Residues Cys-190, Cys-205, Cys-208, and Cys-211 each coordinate Zn(2+).

Belongs to the QueC family. It depends on Zn(2+) as a cofactor.

It carries out the reaction 7-carboxy-7-deazaguanine + NH4(+) + ATP = 7-cyano-7-deazaguanine + ADP + phosphate + H2O + H(+). It participates in purine metabolism; 7-cyano-7-deazaguanine biosynthesis. Functionally, catalyzes the ATP-dependent conversion of 7-carboxy-7-deazaguanine (CDG) to 7-cyano-7-deazaguanine (preQ(0)). In Helicobacter pylori (strain ATCC 700392 / 26695) (Campylobacter pylori), this protein is 7-cyano-7-deazaguanine synthase.